A 211-amino-acid polypeptide reads, in one-letter code: Protein crossbronx-like (211 aa).

Residues asparagine 17–lysine 177 enclose the UBC core domain.

It belongs to the ubiquitin-conjugating enzyme family. FTS subfamily.

This chain is Protein crossbronx-like, found in Drosophila grimshawi (Hawaiian fruit fly).